Reading from the N-terminus, the 330-residue chain is ADP-L-glycero-D-manno-heptose-6-epimerase (330 aa).

Residues 11–12 (FI), 32–33 (DN), Lys-39, Lys-54, 75–79 (EGACS), and Asn-92 each bind NADP(+). Tyr-139 acts as the Proton acceptor in catalysis. Lys-143 is an NADP(+) binding site. Position 168 (Asn-168) interacts with substrate. Residues Val-169 and Lys-177 each coordinate NADP(+). Catalysis depends on Lys-177, which acts as the Proton acceptor. Substrate contacts are provided by residues Arg-179, His-186, 200–203 (FGEY), Arg-213, and Tyr-292.

This sequence belongs to the NAD(P)-dependent epimerase/dehydratase family. HldD subfamily. As to quaternary structure, homopentamer. NADP(+) is required as a cofactor.

It catalyses the reaction ADP-D-glycero-beta-D-manno-heptose = ADP-L-glycero-beta-D-manno-heptose. It participates in nucleotide-sugar biosynthesis; ADP-L-glycero-beta-D-manno-heptose biosynthesis; ADP-L-glycero-beta-D-manno-heptose from D-glycero-beta-D-manno-heptose 7-phosphate: step 4/4. Catalyzes the interconversion between ADP-D-glycero-beta-D-manno-heptose and ADP-L-glycero-beta-D-manno-heptose via an epimerization at carbon 6 of the heptose. In Burkholderia multivorans (strain ATCC 17616 / 249), this protein is ADP-L-glycero-D-manno-heptose-6-epimerase.